A 205-amino-acid chain; its full sequence is Holliday junction resolvase RecU (205 aa).

The segment at 1–26 (MIRYPNGKSYQPIQPIGTKKRISGES) is disordered. Residues Thr-86, Asp-88, Glu-101, and Gln-120 each contribute to the Mg(2+) site.

This sequence belongs to the RecU family. Mg(2+) is required as a cofactor.

It localises to the cytoplasm. It carries out the reaction Endonucleolytic cleavage at a junction such as a reciprocal single-stranded crossover between two homologous DNA duplexes (Holliday junction).. Its function is as follows. Endonuclease that resolves Holliday junction intermediates in genetic recombination. Cleaves mobile four-strand junctions by introducing symmetrical nicks in paired strands. Promotes annealing of linear ssDNA with homologous dsDNA. Required for DNA repair, homologous recombination and chromosome segregation. The polypeptide is Holliday junction resolvase RecU (Bacillus pumilus (strain SAFR-032)).